The following is a 314-amino-acid chain: 4-hydroxy-3-methylbut-2-enyl diphosphate reductase (314 aa).

Cys-12 is a binding site for [4Fe-4S] cluster. His-41 and His-74 together coordinate (2E)-4-hydroxy-3-methylbut-2-enyl diphosphate. Dimethylallyl diphosphate contacts are provided by His-41 and His-74. Residues His-41 and His-74 each contribute to the isopentenyl diphosphate site. A [4Fe-4S] cluster-binding site is contributed by Cys-96. Position 124 (His-124) interacts with (2E)-4-hydroxy-3-methylbut-2-enyl diphosphate. Residue His-124 coordinates dimethylallyl diphosphate. His-124 lines the isopentenyl diphosphate pocket. Residue Glu-126 is the Proton donor of the active site. A (2E)-4-hydroxy-3-methylbut-2-enyl diphosphate-binding site is contributed by Thr-167. Residue Cys-197 coordinates [4Fe-4S] cluster. (2E)-4-hydroxy-3-methylbut-2-enyl diphosphate-binding residues include Ser-225, Ser-226, Asn-227, and Ser-269. Dimethylallyl diphosphate contacts are provided by Ser-225, Ser-226, Asn-227, and Ser-269. 4 residues coordinate isopentenyl diphosphate: Ser-225, Ser-226, Asn-227, and Ser-269.

Belongs to the IspH family. Requires [4Fe-4S] cluster as cofactor.

It carries out the reaction isopentenyl diphosphate + 2 oxidized [2Fe-2S]-[ferredoxin] + H2O = (2E)-4-hydroxy-3-methylbut-2-enyl diphosphate + 2 reduced [2Fe-2S]-[ferredoxin] + 2 H(+). The enzyme catalyses dimethylallyl diphosphate + 2 oxidized [2Fe-2S]-[ferredoxin] + H2O = (2E)-4-hydroxy-3-methylbut-2-enyl diphosphate + 2 reduced [2Fe-2S]-[ferredoxin] + 2 H(+). It participates in isoprenoid biosynthesis; dimethylallyl diphosphate biosynthesis; dimethylallyl diphosphate from (2E)-4-hydroxy-3-methylbutenyl diphosphate: step 1/1. The protein operates within isoprenoid biosynthesis; isopentenyl diphosphate biosynthesis via DXP pathway; isopentenyl diphosphate from 1-deoxy-D-xylulose 5-phosphate: step 6/6. Catalyzes the conversion of 1-hydroxy-2-methyl-2-(E)-butenyl 4-diphosphate (HMBPP) into a mixture of isopentenyl diphosphate (IPP) and dimethylallyl diphosphate (DMAPP). Acts in the terminal step of the DOXP/MEP pathway for isoprenoid precursor biosynthesis. The protein is 4-hydroxy-3-methylbut-2-enyl diphosphate reductase of Haemophilus influenzae (strain 86-028NP).